Reading from the N-terminus, the 323-residue chain is Type II restriction enzyme BsoBI (323 aa).

Residues Asp212, Glu240, and Lys242 each contribute to the Mg(2+) site.

Homodimer.

The catalysed reaction is Endonucleolytic cleavage of DNA to give specific double-stranded fragments with terminal 5'-phosphates.. A P subtype restriction enzyme that recognizes the double-stranded sequence 5'-CYCGRG-3' and cleaves after C-1. In Geobacillus stearothermophilus (Bacillus stearothermophilus), this protein is Type II restriction enzyme BsoBI.